The primary structure comprises 162 residues: Nitric oxide synthase, inducible (162 aa).

The span at 24–37 (LQYHSLSKQQNESP) shows a compositional bias: polar residues. The segment at 24-65 (LQYHSLSKQQNESPQPLVGTGKKSPESLVKPDATPLSSPRHV) is disordered. Zn(2+) contacts are provided by Cys-90 and Cys-95. Residue Ser-98 participates in (6R)-L-erythro-5,6,7,8-tetrahydrobiopterin binding. Glu-132 serves as a coordination point for L-arginine. His-160 lines the FAD pocket.

The protein belongs to the NOS family. In terms of assembly, homodimer. Interacts with NHERF1. Interacts with GAPDH; induced by oxidatively-modified low-densitity lipoprotein (LDL(ox)). Interacts with S100A8 and S100A9 to form the iNOS-S100A8/9 transnitrosylase complex. Interacts with SPSB1, SPSB2 and SPSB4. Interacts with ELOC and CUL5 in the presence of SPSB1 or SPSB2 or SPSB4. Forms a complex with ASL, ASS1 and HSP90AA1; the complex regulates cell-autonomous L-arginine synthesis and citrulline recycling while channeling extracellular L-arginine to nitric oxide synthesis pathway. It depends on heme b as a cofactor. Requires FAD as cofactor. FMN serves as cofactor. (6R)-L-erythro-5,6,7,8-tetrahydrobiopterin is required as a cofactor. Post-translationally, polyubiquitinated; mediated by SPSB1, SPSB2 and SPSB4, leading to proteasomal degradation.

The protein resides in the cytoplasm. It localises to the cytosol. It carries out the reaction 2 L-arginine + 3 NADPH + 4 O2 + H(+) = 2 L-citrulline + 2 nitric oxide + 3 NADP(+) + 4 H2O. With respect to regulation, regulated by calcium/calmodulin. Its function is as follows. Produces nitric oxide (NO) which is a messenger molecule with diverse functions throughout the body. In macrophages, NO mediates tumoricidal and bactericidal actions. Also has nitrosylase activity and mediates cysteine S-nitrosylation of cytoplasmic target proteins such PTGS2/COX2. As component of the iNOS-S100A8/9 transnitrosylase complex involved in the selective inflammatory stimulus-dependent S-nitrosylation of GAPDH implicated in regulation of the GAIT complex activity and probably multiple targets including ANXA5, EZR, MSN and VIM. Involved in inflammation, enhances the synthesis of pro-inflammatory mediators such as IL6 and IL8. The chain is Nitric oxide synthase, inducible (NOS2) from Macaca mulatta (Rhesus macaque).